A 307-amino-acid chain; its full sequence is Ribosomal RNA small subunit methyltransferase H (307 aa).

Residues 32 to 34 (GGH), Asp-52, Phe-78, Asp-99, and Gln-106 each bind S-adenosyl-L-methionine.

Belongs to the methyltransferase superfamily. RsmH family.

The protein resides in the cytoplasm. It catalyses the reaction cytidine(1402) in 16S rRNA + S-adenosyl-L-methionine = N(4)-methylcytidine(1402) in 16S rRNA + S-adenosyl-L-homocysteine + H(+). Its function is as follows. Specifically methylates the N4 position of cytidine in position 1402 (C1402) of 16S rRNA. This is Ribosomal RNA small subunit methyltransferase H from Acinetobacter baumannii (strain AB307-0294).